A 103-amino-acid chain; its full sequence is Nucleoid-associated protein CFF8240_0066 (103 aa).

Belongs to the YbaB/EbfC family. Homodimer.

The protein resides in the cytoplasm. It localises to the nucleoid. Its function is as follows. Binds to DNA and alters its conformation. May be involved in regulation of gene expression, nucleoid organization and DNA protection. This Campylobacter fetus subsp. fetus (strain 82-40) protein is Nucleoid-associated protein CFF8240_0066.